The following is a 518-amino-acid chain: Ribonuclease Y (518 aa).

A helical transmembrane segment spans residues 2-22; sequence GSIIISALLALVIGAVVGFFV. Residues 208–271 form the KH domain; that stretch reads TVSVVNLPND…ETARIALDKL (64 aa). An HD domain is found at 334-427; sequence VLKHSVEVAF…VAAADALSAA (94 aa).

It belongs to the RNase Y family.

The protein localises to the cell membrane. Its function is as follows. Endoribonuclease that initiates mRNA decay. The protein is Ribonuclease Y of Geobacillus thermodenitrificans (strain NG80-2).